The following is a 997-amino-acid chain: Translation initiation factor IF-2 (997 aa).

The interval 101 to 406 (ELAAEQAAAR…SRNQHQDRRH (306 aa)) is disordered. 2 stretches are compositionally biased toward low complexity: residues 116–185 (AEAV…QAEP) and 195–209 (AAPAQAVAEPVEPAK). Residues 231–242 (TELTSQTPTPVA) show a composition bias toward polar residues. Over residues 256-280 (AEPAAAPKTTAKPGEIRRAAAPAAP) the composition is skewed to low complexity. Over residues 281 to 292 (DRAREEARRAAE) the composition is skewed to basic and acidic residues. Residues 385–394 (RAGGKGGRGG) are compositionally biased toward gly residues. Residues 498–665 (PRAPVVTVMG…NVLLQAEILE (168 aa)) form the tr-type G domain. A G1 region spans residues 507–514 (GHVDHGKT). 507–514 (GHVDHGKT) serves as a coordination point for GTP. Residues 532–536 (GITQH) are G2. Positions 553-556 (DTPG) are G3. Residues 553-557 (DTPGH) and 607-610 (NKID) contribute to the GTP site. Residues 607–610 (NKID) are G4. The interval 643–645 (SAK) is G5.

Belongs to the TRAFAC class translation factor GTPase superfamily. Classic translation factor GTPase family. IF-2 subfamily.

Its subcellular location is the cytoplasm. Its function is as follows. One of the essential components for the initiation of protein synthesis. Protects formylmethionyl-tRNA from spontaneous hydrolysis and promotes its binding to the 30S ribosomal subunits. Also involved in the hydrolysis of GTP during the formation of the 70S ribosomal complex. This Bordetella pertussis (strain Tohama I / ATCC BAA-589 / NCTC 13251) protein is Translation initiation factor IF-2.